The primary structure comprises 751 residues: Zinc finger protein 184 (751 aa).

One can recognise a KRAB domain in the interval 28–99 (VTFKDVIVDF…EPSIPVGTCA (72 aa)). Residues serine 117, serine 122, and serine 199 each carry the phosphoserine modification. Polar residues predominate over residues 191-202 (SNLVTQEPSPEE). Residues 191-212 (SNLVTQEPSPEETSTKRSIKQN) are disordered. A Glycyl lysine isopeptide (Lys-Gly) (interchain with G-Cter in SUMO2) cross-link involves residue lysine 206. C2H2-type zinc fingers lie at residues 222–244 (CKCN…QRTH), 250–272 (YKCN…QRIH), 278–300 (YKCD…QRIH), 306–328 (YKCD…QRIH), 334–356 (YTCN…QKIH), 362–384 (FKCD…QKIH), 390–412 (YKCN…HMIH), 418–440 (YECN…QKTH), 446–468 (YDCA…LKIH), 474–496 (YKCN…RRIH), 502–524 (FECS…QKTH), 530–552 (YECK…ERIH), 558–580 (YQCH…RKIH), 586–608 (YKCN…KRIH), 614–636 (YECA…QKTH), 642–664 (YQCN…QRIH), 670–692 (YKCN…QNTH), 698–720 (YNCN…QRIH), and 726–748 (FGCN…QRLH).

It belongs to the krueppel C2H2-type zinc-finger protein family. As to expression, predominant expression in testis.

The protein localises to the nucleus. In terms of biological role, may be involved in transcriptional regulation. The polypeptide is Zinc finger protein 184 (ZNF184) (Homo sapiens (Human)).